The following is a 415-amino-acid chain: Methylaspartate ammonia-lyase 2 (415 aa).

Position 173 (glutamine 173) interacts with (2S,3S)-3-methyl-L-aspartate. Residues aspartate 238, glutamate 273, and aspartate 307 each coordinate Mg(2+). Glutamine 329 lines the (2S,3S)-3-methyl-L-aspartate pocket. Residue lysine 331 is the Proton acceptor of the active site. 360 to 361 (TC) contacts (2S,3S)-3-methyl-L-aspartate.

This sequence belongs to the methylaspartate ammonia-lyase family. In terms of assembly, homodimer. Mg(2+) serves as cofactor.

It catalyses the reaction (2S,3S)-3-methyl-L-aspartate = mesaconate + NH4(+). It functions in the pathway amino-acid degradation; L-glutamate degradation via mesaconate pathway; acetate and pyruvate from L-glutamate: step 2/4. Functionally, involved in the methylaspartate cycle. Catalyzes the formation of the alpha,beta-unsaturated bond by the reversible anti elimination of ammonia from L-threo-beta-methylaspartate (L-threo-(2S,3S)-3-methylaspartate) to give mesaconate. This is Methylaspartate ammonia-lyase 2 from Carboxydothermus hydrogenoformans (strain ATCC BAA-161 / DSM 6008 / Z-2901).